The sequence spans 988 residues: Next to BRCA1 gene 1 protein (988 aa).

In terms of domain architecture, PB1 spans 4 to 86 (QVTLNVTFKN…NQLQMQVHEG (83 aa)). Phosphoserine is present on Ser-117. The tract at residues 126–150 (MKTTEEPAPEQCSSAPCDTDQPQDK) is disordered. The segment at 213–265 (SWHIACSHCQKRIVGVRYQCSLCPSYNICEDCEAGPYTHDTNHVLLKLRRPVV) adopts a ZZ-type zinc-finger fold. The Zn(2+) site is built by Cys-218, Cys-221, Cys-232, Cys-235, Cys-241, Cys-244, His-251, and His-255. 2 ATG8 family proteins-binding regions span residues 543–637 (ASER…PASV) and 745–756 (ASSEDYIIILPE). At Thr-587 the chain carries Phosphothreonine. Residues Ser-591, Ser-597, and Ser-626 each carry the phosphoserine modification. The segment at 611 to 644 (ESEGAGFKAPPDSTVSAKRKAETPASVEETEEDL) is disordered. Disordered stretches follow at residues 768-822 (MYSS…TSQP) and 841-900 (RSAP…HHNG). Residues 795–807 (TEARERLPERESQ) show a composition bias toward basic and acidic residues. Residues 808–822 (PQEQSISDILTTSQP) show a composition bias toward polar residues. The residue at position 860 (Ser-860) is a Phosphoserine. The UBA domain occupies 935-979 (SEDQTTALMAHLFEMGFCDRQLNLRLLRKHNYNILQVVTELLQVN).

As to quaternary structure, homooligomer and heterooligomer. Interacts with TRIM55. Interacts with titin/TTN. Interacts with RNF29, USP8, MAP1LC3A, MAP1LC3B, MAP1LC3C, GABARAP, GABARAPL1 and GABARAPL2. Binds to ubiquitin and ubiquitinated proteins. Interacts with SQSTM1. Interacts with TAX1BP1. Interacts with IRF3; this interaction mediates autophagic degradation of IRF3. Interacts with IL12A and IL12B. Post-translationally, phosphorylated by GSK3A; this phosphorylation inhibits NBR1 involvement in the formation of ubiquitinated protein aggregates. As to expression, expressed in brain.

The protein resides in the cytoplasm. It is found in the cytoplasmic vesicle. Its subcellular location is the autophagosome. The protein localises to the lysosome. It localises to the myofibril. The protein resides in the sarcomere. It is found in the m line. Its function is as follows. Ubiquitin-binding autophagy adapter that participates in different processes including host defense or intracellular homeostasis. Possesses a double function during the selective autophagy by acting as a shuttle bringing ubiquitinated proteins to autophagosomes and also by participating in the formation of protein aggregates. Plays a role in the regulation of the innate immune response by modulating type I interferon production and targeting ubiquitinated IRF3 for autophagic degradation. In response to oxidative stress, promotes an increase in SQSTM1 levels, phosphorylation, and body formation by preventing its autophagic degradation. In turn, activates the KEAP1-NRF2/NFE2L2 antioxidant pathway. Also plays non-autophagy role by mediating the shuttle of IL-12 to late endosome for subsequent secretion. The chain is Next to BRCA1 gene 1 protein (Nbr1) from Mus musculus (Mouse).